The chain runs to 239 residues: Sugar fermentation stimulation protein homolog (239 aa).

This sequence belongs to the SfsA family.

The chain is Sugar fermentation stimulation protein homolog from Sinorhizobium medicae (strain WSM419) (Ensifer medicae).